The primary structure comprises 294 residues: 4-hydroxy-tetrahydrodipicolinate synthase (294 aa).

Position 45 (threonine 45) interacts with pyruvate. The active-site Proton donor/acceptor is tyrosine 133. The Schiff-base intermediate with substrate role is filled by lysine 162. Isoleucine 204 provides a ligand contact to pyruvate.

Belongs to the DapA family. Homotetramer; dimer of dimers.

It is found in the cytoplasm. It catalyses the reaction L-aspartate 4-semialdehyde + pyruvate = (2S,4S)-4-hydroxy-2,3,4,5-tetrahydrodipicolinate + H2O + H(+). It participates in amino-acid biosynthesis; L-lysine biosynthesis via DAP pathway; (S)-tetrahydrodipicolinate from L-aspartate: step 3/4. Catalyzes the condensation of (S)-aspartate-beta-semialdehyde [(S)-ASA] and pyruvate to 4-hydroxy-tetrahydrodipicolinate (HTPA). The polypeptide is 4-hydroxy-tetrahydrodipicolinate synthase (Bartonella tribocorum (strain CIP 105476 / IBS 506)).